A 1352-amino-acid polypeptide reads, in one-letter code: Alpha-protein kinase 1 (1352 aa).

The Arf-GAP domain maps to 7–127 (DPNYGLLRSL…RWTSSLSTSD (121 aa)). The segment at 25–48 (CAECNSANVPYVCIKLGVFICPTC) adopts a C4-type zinc-finger fold. Disordered regions lie at residues 123–164 (LSTS…NNNN), 219–380 (TQSQ…PQHH), 424–445 (QQQQ…NSEP), 457–484 (HNHH…GNNS), 503–560 (FVEE…GGVS), and 619–658 (IINN…TNQN). Residues 237 to 246 (GFSPFNSPRS) show a composition bias toward polar residues. Low complexity-rich tracts occupy residues 268-287 (NNSN…NNGN) and 298-318 (NNNN…NNNN). Polar residues-rich tracts occupy residues 329–352 (KTFS…SGNS) and 359–379 (HPTQ…SPQH). A coiled-coil region spans residues 393–429 (TTQQQLQQQQLQLQQQLQQQLQQQQQQQQQQQQQQQS). 2 stretches are compositionally biased toward basic residues: residues 458 to 470 (NHHH…HHKQ) and 510 to 523 (HQHP…RHHS). Positions 619 to 636 (IINNQNNQNNNNNNNTNN) are enriched in low complexity. Positions 689-781 (YIQQQQQQQQ…QQQQQQHINL (93 aa)) form a coiled coil. Disordered stretches follow at residues 786 to 863 (PLQS…TDED) and 901 to 979 (TSPI…PDAR). Residues 799–812 (PQHSSSQYMNQQGY) are compositionally biased toward polar residues. The segment covering 821–859 (QPQSPQQIQPQPLQQQIFQQVQQQQPQIPQQSPQPLQSS) has biased composition (low complexity). Pro residues predominate over residues 906–915 (QQPPQPPQPV). The span at 931 to 965 (QQQNGPTVPQQQQQQQQQQQQQQQQQQQQQQQQQP) shows a compositional bias: low complexity. The 205-residue stretch at 990–1194 (RFDAKLGKWV…ICHYLGLSSV (205 aa)) folds into the Alpha-type protein kinase domain. 1164–1169 (GKGNLG) lines the ATP pocket. Disordered stretches follow at residues 1198–1234 (PAND…SFNF) and 1279–1352 (QQQQ…KLVS). Positions 1241 to 1320 (HVLEQLNQQQ…QQQQQQQQNG (80 aa)) form a coiled coil. Over residues 1279–1319 (QQQQQQQQQQQQQQQQNQQQNQQQNQQQQQQQQQQQQQQQN) the composition is skewed to low complexity. The span at 1321 to 1332 (HPPPQTPLPPTP) shows a compositional bias: pro residues. Residues 1334–1352 (QKDKPKIEVFGDILRKLVS) show a composition bias toward basic and acidic residues.

The protein belongs to the protein kinase superfamily. Alpha-type protein kinase family. ALPK subfamily.

This chain is Alpha-protein kinase 1 (ak1), found in Dictyostelium discoideum (Social amoeba).